The primary structure comprises 211 residues: Thiamine-phosphate synthase (211 aa).

4-amino-2-methyl-5-(diphosphooxymethyl)pyrimidine contacts are provided by residues 37 to 41 (QLRIK) and asparagine 69. Positions 70 and 89 each coordinate Mg(2+). Residue serine 108 coordinates 4-amino-2-methyl-5-(diphosphooxymethyl)pyrimidine. Position 134-136 (134-136 (TQT)) interacts with 2-[(2R,5Z)-2-carboxy-4-methylthiazol-5(2H)-ylidene]ethyl phosphate. 4-amino-2-methyl-5-(diphosphooxymethyl)pyrimidine is bound at residue lysine 137. Residues glycine 166 and 186–187 (VS) each bind 2-[(2R,5Z)-2-carboxy-4-methylthiazol-5(2H)-ylidene]ethyl phosphate.

Belongs to the thiamine-phosphate synthase family. Requires Mg(2+) as cofactor.

The catalysed reaction is 2-[(2R,5Z)-2-carboxy-4-methylthiazol-5(2H)-ylidene]ethyl phosphate + 4-amino-2-methyl-5-(diphosphooxymethyl)pyrimidine + 2 H(+) = thiamine phosphate + CO2 + diphosphate. It carries out the reaction 2-(2-carboxy-4-methylthiazol-5-yl)ethyl phosphate + 4-amino-2-methyl-5-(diphosphooxymethyl)pyrimidine + 2 H(+) = thiamine phosphate + CO2 + diphosphate. It catalyses the reaction 4-methyl-5-(2-phosphooxyethyl)-thiazole + 4-amino-2-methyl-5-(diphosphooxymethyl)pyrimidine + H(+) = thiamine phosphate + diphosphate. It participates in cofactor biosynthesis; thiamine diphosphate biosynthesis; thiamine phosphate from 4-amino-2-methyl-5-diphosphomethylpyrimidine and 4-methyl-5-(2-phosphoethyl)-thiazole: step 1/1. Functionally, condenses 4-methyl-5-(beta-hydroxyethyl)thiazole monophosphate (THZ-P) and 2-methyl-4-amino-5-hydroxymethyl pyrimidine pyrophosphate (HMP-PP) to form thiamine monophosphate (TMP). The protein is Thiamine-phosphate synthase of Salmonella agona (strain SL483).